The primary structure comprises 272 residues: uncharacterized protein (272 aa).

It localises to the periplasm. Functionally, may be involved in ulvan degradation. Ulvan is the main polysaccharide component of the Ulvales (green seaweed) cell wall. It is composed of disaccharide building blocks comprising 3-sulfated rhamnose (Rha3S) linked to D-glucuronic acid (GlcA), L-iduronic acid (IduA), or D-xylose (Xyl). This is an uncharacterized protein from Formosa agariphila (strain DSM 15362 / KCTC 12365 / LMG 23005 / KMM 3901 / M-2Alg 35-1).